Here is a 700-residue protein sequence, read N- to C-terminus: Polyribonucleotide nucleotidyltransferase (700 aa).

2 residues coordinate Mg(2+): Asp491 and Asp497. Residues 558-617 enclose the KH domain; sequence PNYAVIEINPDKIRDVIGKGGATIRQLTEETGAVIDIDDAGTIRIFGENKAATKAAIAKI. Positions 627–695 constitute an S1 motif domain; sequence GKTYEGTVAR…NRGRIKLTMK (69 aa).

It belongs to the polyribonucleotide nucleotidyltransferase family. Component of the RNA degradosome, which is a multiprotein complex involved in RNA processing and mRNA degradation. It depends on Mg(2+) as a cofactor.

Its subcellular location is the cytoplasm. The catalysed reaction is RNA(n+1) + phosphate = RNA(n) + a ribonucleoside 5'-diphosphate. In terms of biological role, involved in mRNA degradation. Catalyzes the phosphorolysis of single-stranded polyribonucleotides processively in the 3'- to 5'-direction. The protein is Polyribonucleotide nucleotidyltransferase of Psychrobacter arcticus (strain DSM 17307 / VKM B-2377 / 273-4).